We begin with the raw amino-acid sequence, 106 residues long: Phosphoribosyl-ATP pyrophosphatase (106 aa).

The protein belongs to the PRA-PH family.

The protein localises to the cytoplasm. It catalyses the reaction 1-(5-phospho-beta-D-ribosyl)-ATP + H2O = 1-(5-phospho-beta-D-ribosyl)-5'-AMP + diphosphate + H(+). Its pathway is amino-acid biosynthesis; L-histidine biosynthesis; L-histidine from 5-phospho-alpha-D-ribose 1-diphosphate: step 2/9. This is Phosphoribosyl-ATP pyrophosphatase from Methylobacillus flagellatus (strain ATCC 51484 / DSM 6875 / VKM B-1610 / KT).